The chain runs to 274 residues: Thiamine kinase (274 aa).

It belongs to the thiamine kinase family.

The enzyme catalyses thiamine + ATP = thiamine phosphate + ADP + H(+). Its pathway is cofactor biosynthesis; thiamine diphosphate biosynthesis; thiamine phosphate from thiamine: step 1/1. Its function is as follows. Catalyzes the ATP-dependent phosphorylation of thiamine to thiamine phosphate. Is involved in thiamine salvage. The sequence is that of Thiamine kinase from Salmonella typhi.